The primary structure comprises 1439 residues: Receptor-type tyrosine-protein phosphatase kappa (1439 aa).

The signal sequence occupies residues 1–26 (MDTTAAAALPAFVALLLLSPWPLLGS). Over 27-752 (AQGQFSAGGC…PAKQTDRVVK (726 aa)) the chain is Extracellular. Residues 31–194 (FSAGGCTFDD…IQVLSYPCDK (164 aa)) enclose the MAM domain. Residues Asn101, Asn140, and Asn211 are each glycosylated (N-linked (GlcNAc...) asparagine). The 86-residue stretch at 196–281 (PHFLRLGDVE…TQSERGSGVS (86 aa)) folds into the Ig-like C2-type domain. A disulfide bridge connects residues Cys216 and Cys270. 4 consecutive Fibronectin type-III domains span residues 294-389 (PIAP…CAEP), 392-488 (TPKT…TDED), 491-595 (GPVP…SAPT), and 597-680 (PDYE…GNLP). 9 N-linked (GlcNAc...) asparagine glycosylation sites follow: Asn416, Asn424, Asn436, Asn462, Asn552, Asn586, Asn590, Asn607, and Asn690. A helical membrane pass occupies residues 753–774 (IAGISAGILVFILLLLVVILIV). Residues 775–1439 (KKSKLAKKRK…DVALEYLESS (665 aa)) are Cytoplasmic-facing. Ser856 carries the phosphoserine modification. Tyrosine-protein phosphatase domains are found at residues 887-1141 (FKEE…ILEA) and 1173-1435 (LKDE…ALEY). Residues Asp1050, 1082 to 1088 (CSAGAGR), and Gln1126 each bind substrate. Catalysis depends on Cys1082, which acts as the Phosphocysteine intermediate. The active-site Phosphocysteine intermediate is the Cys1376.

Belongs to the protein-tyrosine phosphatase family. Receptor class 2B subfamily. This protein undergoes proteolytic processing. In terms of tissue distribution, high levels in lung, brain and colon; less in liver, pancreas, stomach, kidney, placenta and mammary carcinoma.

It localises to the cell junction. Its subcellular location is the adherens junction. The protein localises to the cell membrane. It catalyses the reaction O-phospho-L-tyrosyl-[protein] + H2O = L-tyrosyl-[protein] + phosphate. Functionally, regulation of processes involving cell contact and adhesion such as growth control, tumor invasion, and metastasis. Negative regulator of EGFR signaling pathway. Forms complexes with beta-catenin and gamma-catenin/plakoglobin. Beta-catenin may be a substrate for the catalytic activity of PTPRK/PTP-kappa. This is Receptor-type tyrosine-protein phosphatase kappa (PTPRK) from Homo sapiens (Human).